The sequence spans 752 residues: Zinc finger BED domain-containing protein RICESLEEPER 3 (752 aa).

The BED-type zinc-finger motif lies at 106 to 166 (RKKSVVWEHF…ASCPMLKNED (61 aa)). 4 residues coordinate Zn(2+): Cys129, Cys132, His153, and Cys159. An HATC (Hobo-Ac-Tam3) domain region spans residues 647 to 733 (ELEQYLEEAL…EALFCAKDWL (87 aa)).

In terms of assembly, homodimer.

Its subcellular location is the nucleus. Functionally, transposase-like protein that is essential for plant growth and development. May regulate global gene expression by recruiting other cellular factors. The polypeptide is Zinc finger BED domain-containing protein RICESLEEPER 3 (Oryza sativa subsp. japonica (Rice)).